The following is a 43-amino-acid chain: Protein PsbN (43 aa).

Residues 7 to 29 (ITIFLSGLLVSFTGYALYTAFGQ) traverse the membrane as a helical segment.

This sequence belongs to the PsbN family.

It is found in the plastid membrane. May play a role in photosystem I and II biogenesis. This Cuscuta reflexa (Southern Asian dodder) protein is Protein PsbN.